The chain runs to 355 residues: Replication-associated protein (355 aa).

Positions 11–114 constitute a CRESS-DNA virus Rep endonuclease domain; it reads SHRNANTFLT…PLAVFERGTF (104 aa). The short motif at 18-21 is the RCR-1 element; it reads FLTY. A divalent metal cation-binding residues include glutamate 52, histidine 60, and histidine 62. Residues 60-62 carry the RCR-2 motif; the sequence is HLH. The active-site For DNA cleavage activity is the tyrosine 100. The RCR-3 signature appears at 100–103; the sequence is YILK. Glutamate 104 serves as a coordination point for a divalent metal cation. Positions 175-187 are oligomerization; that stretch reads SANKLFPEIQEEF. 229–236 serves as a coordination point for ATP; sequence GPTRTGKS. Positions 252 to 270 are transactivation; sequence VDWSSYNEDAIYNIVDDIP. Residues 292–303 carry the Nuclear localization signal motif; that stretch reads KYGKKKKVQKKS.

Belongs to the geminiviridae Rep protein family. In terms of assembly, homooligomer. Rep binds to repeated DNA motifs (iterons). Forms the O-complex, which is a Rep-DNA complex involved in the initiation of RCR. Part of the C- and V-complexes which are RepA-Rep-DNA complexes involved in the c-sense and v-sense transcription. The cofactor is Mg(2+). Mn(2+) serves as cofactor.

It localises to the host nucleus. Essential for the replication of viral ssDNA. The closed circular ssDNA genome is first converted to a superhelical dsDNA. Rep binds a specific region at the genome origin of replication. It introduces an endonucleolytic nick within the conserved sequence 5'-TAATATTAC-3' in the intergenic region of the genome present in all geminiviruses, thereby initiating the rolling circle replication (RCR). Following cleavage, binds covalently to the 5'-phosphate of DNA as a tyrosyl ester. The cleavage gives rise to a free 3'-OH that serves as a primer for the cellular DNA polymerase. The polymerase synthesizes the (+) strand DNA by rolling circle mechanism. After one round of replication, a Rep-catalyzed nucleotidyl transfer reaction releases a circular single-stranded virus genome, thereby terminating the replication. Displays origin-specific DNA cleavage, nucleotidyl transferase, ATPase and helicase activities. Acts as an inhibitor of C-sense gene transcription. The sequence is that of Replication-associated protein from Maize streak virus genotype A (isolate South Africa) (MSV).